Consider the following 183-residue polypeptide: Peptidyl-tRNA hydrolase (183 aa).

Tyr14 is a tRNA binding site. His19 functions as the Proton acceptor in the catalytic mechanism. Residues Tyr61, Asn63, and Asn109 each contribute to the tRNA site.

This sequence belongs to the PTH family. As to quaternary structure, monomer.

The protein resides in the cytoplasm. It carries out the reaction an N-acyl-L-alpha-aminoacyl-tRNA + H2O = an N-acyl-L-amino acid + a tRNA + H(+). In terms of biological role, hydrolyzes ribosome-free peptidyl-tRNAs (with 1 or more amino acids incorporated), which drop off the ribosome during protein synthesis, or as a result of ribosome stalling. Its function is as follows. Catalyzes the release of premature peptidyl moieties from peptidyl-tRNA molecules trapped in stalled 50S ribosomal subunits, and thus maintains levels of free tRNAs and 50S ribosomes. The sequence is that of Peptidyl-tRNA hydrolase from Aliarcobacter butzleri (strain RM4018) (Arcobacter butzleri).